We begin with the raw amino-acid sequence, 821 residues long: E3 ubiquitin-protein ligase RSP5 (821 aa).

Positions Met-1 to Arg-112 constitute a C2 domain. Composition is skewed to polar residues over residues Thr-133–Asn-144 and Leu-188–Ser-201. 2 disordered regions span residues Thr-133 to Arg-239 and Arg-255 to Asp-359. Over residues Gln-202–Gly-217 the composition is skewed to low complexity. The region spanning Gly-231–Ala-264 is the WW 1 domain. Residues Arg-255–Arg-272 show a composition bias toward polar residues. Residues Leu-281–Thr-296 show a composition bias toward basic and acidic residues. Polar residues predominate over residues Gly-297–Thr-312. The span at Ala-320–Gly-339 shows a compositional bias: low complexity. 2 consecutive WW domains span residues Gly-339 to Arg-372 and Gly-399 to Leu-432. Residues Ser-488–Glu-821 enclose the HECT domain. Cys-789 acts as the Glycyl thioester intermediate in catalysis.

The protein belongs to the RSP5/NEDD4 family. In terms of assembly, interacts with apyA and creD.

It is found in the cytoplasm. It catalyses the reaction S-ubiquitinyl-[E2 ubiquitin-conjugating enzyme]-L-cysteine + [acceptor protein]-L-lysine = [E2 ubiquitin-conjugating enzyme]-L-cysteine + N(6)-ubiquitinyl-[acceptor protein]-L-lysine.. It functions in the pathway protein modification; protein ubiquitination. E3 ubiquitin-protein ligase which accepts ubiquitin from an E2 ubiquitin-conjugating enzyme in the form of a thioester and then directly transfers the ubiquitin to targeted substrates. Probably involved in the regulatory network controlling carbon source utilization. Ubiquitinates 'Lys-528' of the uric acid/xanthine transporter uapA at the cell membrane, leading to its internalization, sorting into the endosomal pathway to the vacuolar lumen where it is eventually degraded. This is E3 ubiquitin-protein ligase RSP5 (hulA) from Emericella nidulans (strain FGSC A4 / ATCC 38163 / CBS 112.46 / NRRL 194 / M139) (Aspergillus nidulans).